A 1415-amino-acid polypeptide reads, in one-letter code: G8 domain-containing protein DDB_G0278975 (1415 aa).

A signal peptide spans 1–24 (MKINKIILFFFLSCLYLFSSSVSA). 2 helical membrane-spanning segments follow: residues 107–127 (INLN…GLFT) and 138–158 (LLFI…SIKI). N-linked (GlcNAc...) asparagine glycans are attached at residues Asn245, Asn366, Asn428, Asn466, and Asn579. One can recognise a G8 domain in the interval 566 to 692 (STWPNGIIPS…YHNTWSKLSA (127 aa)). PbH1 repeat units lie at residues 819–841 (LKNS…TIHG) and 842–864 (TNNV…YLED). N-linked (GlcNAc...) asparagine glycosylation is found at Asn844, Asn985, Asn1009, Asn1023, Asn1099, Asn1244, and Asn1342.

This sequence belongs to the comF family.

It is found in the membrane. In Dictyostelium discoideum (Social amoeba), this protein is G8 domain-containing protein DDB_G0278975.